Here is a 494-residue protein sequence, read N- to C-terminus: Zinc finger and SCAN domain-containing protein 30 (494 aa).

The SCAN box domain occupies 48–130 (RQKFRQFSYS…TMLEELEKEL (83 aa)). Lys-197 is covalently cross-linked (Glycyl lysine isopeptide (Lys-Gly) (interchain with G-Cter in SUMO2)). 7 C2H2-type zinc fingers span residues 301–323 (YECF…QRIH), 329–351 (YACK…QRIH), 357–379 (YECC…RRIH), 385–407 (YECG…KKIH), 413–435 (YECI…QRIH), 441–463 (YECN…QRIH), and 469–491 (YECS…QRTH).

It belongs to the krueppel C2H2-type zinc-finger protein family.

The protein localises to the nucleus. Its function is as follows. May be involved in transcriptional regulation. In Homo sapiens (Human), this protein is Zinc finger and SCAN domain-containing protein 30 (ZSCAN30).